Here is a 480-residue protein sequence, read N- to C-terminus: MAQFGSVCLPEAFLDVMREAMPAGLAMDDFIAACQRPLRRSIRVNTLKISVDAFLAQVAPYGWQLTPVPWCPEGFWIERDDEDALPLGSTAEHLSGQFYIQEASSMLPVAALFADGNTPARVMDVAAAPGSKTTQIAALMQNQGFILANEYSASRVKVLHANISRCGIHNVGLTHFDGRVFGAALPEQFDAILLDAPCSGEGVVRKDPDALRNWSPQSDQEIAATQRELIDSAFHALAPGGTLVYSTCTLNREENQETVRWLLARYPQAVEVLSLEALFPGADAALTEEGFLHVFPQIYDCEGFFVARLRKTASVEPLPAPTYKVGAFPFTPLKTREAQAVIAAARKVGLEWDETLELWQRDKEIWLFPQAFTPFIGKVRFSRTGIRLAEIHNKGYRWQHEAVVALAGSDNPLGFELSAEEAQEWYRGRDVWPQTVPDADDVIVTFQHQPLGLAKKVGSRLKNSYPRELVRDGVLFSAPV.

Residues Ala126–Lys132, Glu150, Asp177, and Asp195 contribute to the S-adenosyl-L-methionine site. The active-site Nucleophile is Cys248.

The protein belongs to the class I-like SAM-binding methyltransferase superfamily. RsmB/NOP family.

Its subcellular location is the cytoplasm. It catalyses the reaction cytidine(1407) in 16S rRNA + S-adenosyl-L-methionine = 5-methylcytidine(1407) in 16S rRNA + S-adenosyl-L-homocysteine + H(+). Specifically methylates the cytosine at position 1407 (m5C1407) of 16S rRNA. In Cronobacter sakazakii (strain ATCC BAA-894) (Enterobacter sakazakii), this protein is Ribosomal RNA small subunit methyltransferase F.